A 140-amino-acid chain; its full sequence is Putative pre-16S rRNA nuclease (140 aa).

The protein belongs to the YqgF nuclease family.

The protein resides in the cytoplasm. Could be a nuclease involved in processing of the 5'-end of pre-16S rRNA. This Chlorobium chlorochromatii (strain CaD3) protein is Putative pre-16S rRNA nuclease.